The following is a 45-amino-acid chain: uncharacterized protein (45 aa).

A C2H2-type zinc finger spans residues 2 to 25 (YQCLRCGGIFNKRREVVEHLLVGH).

This is an uncharacterized protein from Sulfolobus spindle-shape virus 1 (SSV1).